An 888-amino-acid chain; its full sequence is C2H2 zinc finger transcription factor sltA (888 aa).

Disordered stretches follow at residues 1–78 (MSTS…QRSP), 132–176 (IDSQ…SSEN), and 388–407 (RSSM…ASAP). Composition is skewed to polar residues over residues 23-32 (PSLSASTSIE), 167-176 (GLGTSLSSEN), and 388-397 (RSSMPSNREP). 2 C2H2-type zinc fingers span residues 500 to 522 (QKCK…EKTH) and 561 to 586 (YKCK…EKAH). Residues 589–663 (DYVRSKHNGR…PTQTGSGDFP (75 aa)) are disordered. The span at 602 to 632 (KASNGATPQTPSIATPSSKAQGITTPLTGSE) shows a compositional bias: polar residues.

The protein localises to the nucleus. Its function is as follows. Transcription factor that contributes to azole resistance by coregulating the expression of the drug target erg11A and the drug efflux pump mdr1. Binds to the 5'-AGGCA-3' motif in the promoters of ergosterol biosynthesis and drug pump genes to regulate their expression. Is able to interact with the promoters of sltA, sltB, erg11A, erg13A, erg24A, mdr1, abcE and mfsC. Involved in antifungal drug resistance to azoles, terbinafine, and simvastatin but not amphotericin B or caspofungin. The chain is C2H2 zinc finger transcription factor sltA from Aspergillus fumigatus (strain CBS 144.89 / FGSC A1163 / CEA10) (Neosartorya fumigata).